The chain runs to 751 residues: Translation initiation factor IF-2, chloroplastic (751 aa).

The segment at 86–156 (KKEKSKFRKD…KSKKQTSAKN (71 aa)) is disordered. A compositionally biased stretch (basic and acidic residues) spans 93–106 (RKDEDYDSLKREDN). Low complexity predominate over residues 129–143 (VSNTNTLNKKNVVKS). Residues 250–423 (KRPPVIAIMG…ILVSEIEDLK (174 aa)) enclose the tr-type G domain. The interval 259 to 266 (GHVDHGKT) is G1. 259–266 (GHVDHGKT) serves as a coordination point for GTP. The interval 284-288 (GITQK) is G2. The interval 309 to 312 (DTPG) is G3. Residues 309-313 (DTPGH) and 363-366 (NKID) each bind GTP. The interval 363–366 (NKID) is G4. The segment at 399–401 (SAM) is G5.

Belongs to the TRAFAC class translation factor GTPase superfamily. Classic translation factor GTPase family. IF-2 subfamily.

The protein localises to the plastid. It localises to the chloroplast. Its function is as follows. One of the essential components for the initiation of protein synthesis. Protects formylmethionyl-tRNA from spontaneous hydrolysis and promotes its binding to the 30S ribosomal subunits. Also involved in the hydrolysis of GTP during the formation of the 70S ribosomal complex. In Rhodomonas salina (Cryptomonas salina), this protein is Translation initiation factor IF-2, chloroplastic (infB).